The primary structure comprises 760 residues: Cellulose synthase-like protein G1 (760 aa).

The next 2 membrane-spanning stretches (helical) occupy residues 28–48 (IYAI…VHSL) and 54–74 (TLIT…WATT). Catalysis depends on residues Asp-142 and Asp-447. 5 helical membrane passes run 530 to 550 (IPLT…VSVF), 558 to 578 (FWLY…DFLL), 593 to 613 (LMIK…LKTL), 656 to 676 (VAIV…FCGG), and 680 to 700 (LELM…GAMV).

Belongs to the glycosyltransferase 2 family. Plant cellulose synthase-like G subfamily. As to expression, expressed in young seedlings, primarily in the vascular tissue.

Its subcellular location is the golgi apparatus membrane. Thought to be a Golgi-localized beta-glycan synthase that polymerize the backbones of noncellulosic polysaccharides (hemicelluloses) of plant cell wall. This is Cellulose synthase-like protein G1 (CSLG1) from Arabidopsis thaliana (Mouse-ear cress).